Reading from the N-terminus, the 283-residue chain is Protein-L-isoaspartate O-methyltransferase (283 aa).

Ser122 is a catalytic residue.

Belongs to the methyltransferase superfamily. L-isoaspartyl/D-aspartyl protein methyltransferase family.

Its subcellular location is the cytoplasm. It carries out the reaction [protein]-L-isoaspartate + S-adenosyl-L-methionine = [protein]-L-isoaspartate alpha-methyl ester + S-adenosyl-L-homocysteine. Catalyzes the methyl esterification of L-isoaspartyl residues in peptides and proteins that result from spontaneous decomposition of normal L-aspartyl and L-asparaginyl residues. It plays a role in the repair and/or degradation of damaged proteins. The polypeptide is Protein-L-isoaspartate O-methyltransferase (Leptothrix cholodnii (strain ATCC 51168 / LMG 8142 / SP-6) (Leptothrix discophora (strain SP-6))).